Reading from the N-terminus, the 446-residue chain is Na(+)/H(+) antiporter NhaA (446 aa).

A run of 11 helical transmembrane segments spans residues 23–43, 73–93, 109–129, 138–158, 167–187, 193–213, 219–239, 314–334, 348–368, 381–401, and 419–439; these read GGML…SPWG, LMTF…GLEI, LLPI…YYFM, GLAI…SLFG, VFLT…IALF, SVNY…GNFF, WFYI…GIHA, MVNY…SLTA, VLAG…WLVI, WVNL…SLFI, and GVIL…QFAL.

It belongs to the NhaA Na(+)/H(+) (TC 2.A.33) antiporter family.

It is found in the cell inner membrane. It carries out the reaction Na(+)(in) + 2 H(+)(out) = Na(+)(out) + 2 H(+)(in). Its function is as follows. Na(+)/H(+) antiporter that extrudes sodium in exchange for external protons. This is Na(+)/H(+) antiporter NhaA from Phocaeicola vulgatus (strain ATCC 8482 / DSM 1447 / JCM 5826 / CCUG 4940 / NBRC 14291 / NCTC 11154) (Bacteroides vulgatus).